Consider the following 100-residue polypeptide: NADH-quinone oxidoreductase subunit K (100 aa).

3 consecutive transmembrane segments (helical) span residues 4–24 (LQHG…GLLI), 28–48 (LLFM…AFVV), and 60–80 (VMYI…LALL).

The protein belongs to the complex I subunit 4L family. NDH-1 is composed of 13 different subunits. Subunits NuoA, H, J, K, L, M, N constitute the membrane sector of the complex.

It is found in the cell inner membrane. It carries out the reaction a quinone + NADH + 5 H(+)(in) = a quinol + NAD(+) + 4 H(+)(out). Its function is as follows. NDH-1 shuttles electrons from NADH, via FMN and iron-sulfur (Fe-S) centers, to quinones in the respiratory chain. The immediate electron acceptor for the enzyme in this species is believed to be ubiquinone. Couples the redox reaction to proton translocation (for every two electrons transferred, four hydrogen ions are translocated across the cytoplasmic membrane), and thus conserves the redox energy in a proton gradient. The chain is NADH-quinone oxidoreductase subunit K from Edwardsiella ictaluri (strain 93-146).